The chain runs to 327 residues: Undecaprenyl-phosphate 4-deoxy-4-formamido-L-arabinose transferase (327 aa).

Residues Met-1–Leu-235 lie on the Cytoplasmic side of the membrane. Residues Leu-236 to Val-256 traverse the membrane as a helical segment. The Periplasmic portion of the chain corresponds to Leu-257–Gly-269. Residues Val-270–Leu-290 traverse the membrane as a helical segment. Residues Leu-291–Gln-327 are Cytoplasmic-facing.

The protein belongs to the glycosyltransferase 2 family.

It is found in the cell inner membrane. It catalyses the reaction UDP-4-deoxy-4-formamido-beta-L-arabinose + di-trans,octa-cis-undecaprenyl phosphate = 4-deoxy-4-formamido-alpha-L-arabinopyranosyl di-trans,octa-cis-undecaprenyl phosphate + UDP. It participates in glycolipid biosynthesis; 4-amino-4-deoxy-alpha-L-arabinose undecaprenyl phosphate biosynthesis; 4-amino-4-deoxy-alpha-L-arabinose undecaprenyl phosphate from UDP-4-deoxy-4-formamido-beta-L-arabinose and undecaprenyl phosphate: step 1/2. The protein operates within bacterial outer membrane biogenesis; lipopolysaccharide biosynthesis. In terms of biological role, catalyzes the transfer of 4-deoxy-4-formamido-L-arabinose from UDP to undecaprenyl phosphate. The modified arabinose is attached to lipid A and is required for resistance to polymyxin and cationic antimicrobial peptides. The sequence is that of Undecaprenyl-phosphate 4-deoxy-4-formamido-L-arabinose transferase from Salmonella newport (strain SL254).